The sequence spans 550 residues: Carboxypeptidase Y homolog A (550 aa).

A signal peptide spans 1 to 18; sequence MKSLVLGLLVGSAIASGP. Positions 19–131 are excised as a propeptide; it reads LQHVLHAPPE…KLAQYDLRIR (113 aa). 5 disulfide bridges follow: Cys185-Cys424, Cys319-Cys333, Cys343-Cys366, Cys350-Cys359, and Cys388-Cys394. N-linked (GlcNAc...) asparagine glycosylation occurs at Asn216. Ser272 is a catalytic residue. Residue Asp463 is part of the active site. Asn493 and Asn514 each carry an N-linked (GlcNAc...) asparagine glycan. Residue His525 is part of the active site.

It belongs to the peptidase S10 family.

It is found in the vacuole. The catalysed reaction is Release of a C-terminal amino acid with broad specificity.. Functionally, vacuolar carboxypeptidase involved in degradation of small peptides. Digests preferentially peptides containing an aliphatic or hydrophobic residue in P1' position, as well as methionine, leucine or phenylalanine in P1 position of ester substrate. This chain is Carboxypeptidase Y homolog A (CPYA), found in Paracoccidioides lutzii (strain ATCC MYA-826 / Pb01) (Paracoccidioides brasiliensis).